A 122-amino-acid chain; its full sequence is Small ribosomal subunit protein bS6 (122 aa).

It belongs to the bacterial ribosomal protein bS6 family.

Functionally, binds together with bS18 to 16S ribosomal RNA. In Neisseria meningitidis serogroup C (strain 053442), this protein is Small ribosomal subunit protein bS6.